Reading from the N-terminus, the 313-residue chain is NADH-ubiquinone oxidoreductase chain 1 (313 aa).

Helical transmembrane passes span 7 to 27 (LIGS…LTLL), 73 to 93 (IFYY…WMSM), 104 to 124 (LGVL…MVAG), 150 to 170 (LALI…LNFF), 175 to 195 (YMWF…SCLA), 226 to 246 (LIFL…SVIF), 250 to 270 (DIYS…FIWV), and 293 to 313 (MSLN…SMLF).

This sequence belongs to the complex I subunit 1 family.

It localises to the mitochondrion inner membrane. The enzyme catalyses a ubiquinone + NADH + 5 H(+)(in) = a ubiquinol + NAD(+) + 4 H(+)(out). Core subunit of the mitochondrial membrane respiratory chain NADH dehydrogenase (Complex I) that is believed to belong to the minimal assembly required for catalysis. Complex I functions in the transfer of electrons from NADH to the respiratory chain. The immediate electron acceptor for the enzyme is believed to be ubiquinone. This is NADH-ubiquinone oxidoreductase chain 1 from Aedes aegypti (Yellowfever mosquito).